The chain runs to 944 residues: snRNA-activating protein complex subunit 4 homolog (944 aa).

Residues 1–22 (MSDLVMFEPGASTSTDVPTNTD) are disordered. The segment covering 11-22 (ASTSTDVPTNTD) has biased composition (polar residues). Residues 177-244 (TSNFDRRQWT…AVKSKWYNEL (68 aa)) form the Myb-like 1 domain. Positions 245 to 301 (NPKWNKEHWSNEEVEKLKYLRESPKFVSWPMLALNLGTNRTSYQCMEKYKTEVSQHS) constitute an HTH myb-type 1 domain. The H-T-H motif DNA-binding region spans 273–297 (WPMLALNLGTNRTSYQCMEKYKTEV). In terms of domain architecture, Myb-like 2 spans 304 to 350 (WSQDEDTKLIALTKITSINGHIQWDKVAQCMPGRTRQQVRTRFSHTL). HTH myb-type domains follow at residues 351-406 (DASV…NRSA) and 407-459 (HVNE…AAKL). 2 DNA-binding regions (H-T-H motif) span residues 379–402 (WAKV…TNVL) and 432–455 (WAKC…LQLI). Positions 911–921 (ARPARPPRSSA) are enriched in low complexity. The tract at residues 911-935 (ARPARPPRSSAGTPTPSHVSIDTES) is disordered. Residues 922–935 (GTPTPSHVSIDTES) show a composition bias toward polar residues.

In terms of tissue distribution, broadly expressed in all tissues, including head, vulva and tail.

It localises to the nucleus. In terms of biological role, binds to the promoter regions of RNA polymerase II and III small-nuclear RNA genes, type 3 RNA polymerase III non-coding RNA genes, small nucleolar RNAs and transfer RNA genes. Required for expression of mature 21U-RNAs. The polypeptide is snRNA-activating protein complex subunit 4 homolog (Caenorhabditis elegans).